The primary structure comprises 105 residues: Urease subunit beta (105 aa).

Belongs to the urease beta subunit family. Heterotrimer of UreA (gamma), UreB (beta) and UreC (alpha) subunits. Three heterotrimers associate to form the active enzyme.

It localises to the cytoplasm. It carries out the reaction urea + 2 H2O + H(+) = hydrogencarbonate + 2 NH4(+). The protein operates within nitrogen metabolism; urea degradation; CO(2) and NH(3) from urea (urease route): step 1/1. The sequence is that of Urease subunit beta from Shewanella halifaxensis (strain HAW-EB4).